A 709-amino-acid chain; its full sequence is Catalase HPII (709 aa).

A compositionally biased stretch (polar residues) spans Met-1–Lys-26. Residues Met-1 to Ala-32 form a disordered region. Active-site residues include His-90 and Asn-163. Tyr-377 contributes to the heme binding site. Residues Arg-419–Gly-443 form a disordered region.

The protein belongs to the catalase family. HPII subfamily. Heme is required as a cofactor.

The protein resides in the cytoplasm. The catalysed reaction is 2 H2O2 = O2 + 2 H2O. Decomposes hydrogen peroxide into water and oxygen; serves to protect cells from the toxic effects of hydrogen peroxide. The sequence is that of Catalase HPII (katE) from Pseudomonas aeruginosa (strain ATCC 15692 / DSM 22644 / CIP 104116 / JCM 14847 / LMG 12228 / 1C / PRS 101 / PAO1).